Consider the following 134-residue polypeptide: Replication enhancer protein (134 aa).

The protein belongs to the geminiviridae replication enhancer protein family. Homooligomer. Interacts with the replication-associated protein (REP). Interacts with host proliferating cell nuclear antigen (PCNA). Interacts with host retinoblastoma-related protein 1 (RBR1), and may thereby deregulate the host cell cycle. Oligomerization and interaction with PCNA are necessary for optimal replication enhancement.

Its function is as follows. Increases viral DNA accumulation. Enhances infectivity and symptom expression. In Tomato yellow leaf curl Sardinia virus (TYLCSV), this protein is Replication enhancer protein.